Here is a 339-residue protein sequence, read N- to C-terminus: Phenylalanine--tRNA ligase alpha subunit (339 aa).

Glutamate 250 serves as a coordination point for Mg(2+).

This sequence belongs to the class-II aminoacyl-tRNA synthetase family. Phe-tRNA synthetase alpha subunit type 1 subfamily. Tetramer of two alpha and two beta subunits. It depends on Mg(2+) as a cofactor.

It is found in the cytoplasm. It catalyses the reaction tRNA(Phe) + L-phenylalanine + ATP = L-phenylalanyl-tRNA(Phe) + AMP + diphosphate + H(+). The protein is Phenylalanine--tRNA ligase alpha subunit of Parabacteroides distasonis (strain ATCC 8503 / DSM 20701 / CIP 104284 / JCM 5825 / NCTC 11152).